The chain runs to 516 residues: 2-isopropylmalate synthase (516 aa).

The region spanning 5 to 268 is the Pyruvate carboxyltransferase domain; it reads LIIFDTTLRD…DLGIDTTQIV (264 aa). The Mn(2+) site is built by Asp14, His202, His204, and Asn239. The regulatory domain stretch occupies residues 395–516; that stretch reads KFVSLSQHSE…DKLNPQRADI (122 aa).

It belongs to the alpha-IPM synthase/homocitrate synthase family. LeuA type 1 subfamily. Homodimer. It depends on Mn(2+) as a cofactor.

It is found in the cytoplasm. The catalysed reaction is 3-methyl-2-oxobutanoate + acetyl-CoA + H2O = (2S)-2-isopropylmalate + CoA + H(+). It participates in amino-acid biosynthesis; L-leucine biosynthesis; L-leucine from 3-methyl-2-oxobutanoate: step 1/4. Functionally, catalyzes the condensation of the acetyl group of acetyl-CoA with 3-methyl-2-oxobutanoate (2-ketoisovalerate) to form 3-carboxy-3-hydroxy-4-methylpentanoate (2-isopropylmalate). The chain is 2-isopropylmalate synthase from Paraburkholderia phymatum (strain DSM 17167 / CIP 108236 / LMG 21445 / STM815) (Burkholderia phymatum).